The primary structure comprises 1155 residues: Pesticidal crystal protein Cry1Ab (1155 aa).

The protein belongs to the delta endotoxin family.

In terms of biological role, promotes colloidosmotic lysis by binding to the midgut epithelial cells of many lepidopteran larvae. In Bacillus thuringiensis subsp. aizawai, this protein is Pesticidal crystal protein Cry1Ab (cry1Ab).